The chain runs to 240 residues: Sulfite dehydrogenase subunit B (240 aa).

4Fe-4S ferredoxin-type domains follow at residues 4–34 (LALV…WAGP), 64–95 (TETV…KRPD), and 97–126 (GVVL…LDAQ). Residues Cys-13, Cys-16, Cys-19, Cys-23, Cys-73, Cys-76, Cys-81, Cys-85, Cys-106, Cys-109, Cys-112, and Cys-116 each contribute to the [4Fe-4S] cluster site.

Forms a heterotrimeric membrane-bound complex composed of a catalytic heterodimer (SoeAB) and a membrane anchor protein (SoeC). It depends on [4Fe-4S] cluster as a cofactor.

The protein localises to the cell inner membrane. Its function is as follows. Part of the SoeABC complex that catalyzes the oxidation of sulfite to sulfate. SoeB is probably the electron transfer subunit. This is Sulfite dehydrogenase subunit B from Allochromatium vinosum (strain ATCC 17899 / DSM 180 / NBRC 103801 / NCIMB 10441 / D) (Chromatium vinosum).